Reading from the N-terminus, the 89-residue chain is Venom peptide BmKAPI (89 aa).

Positions 1–22 are cleaved as a signal peptide; the sequence is MKFVFASFALFVIFLCFSQSLS. Intrachain disulfides connect cysteine 28–cysteine 66, cysteine 37–cysteine 62, cysteine 41–cysteine 55, cysteine 46–cysteine 86, and cysteine 68–cysteine 80. In terms of domain architecture, TIL spans 28–86; sequence CRDNEVFDNCISNCGPPRCSNILNTYPCTNLGPLCTPGCKCKDGRVYDNQGRCVLQTEC.

This sequence belongs to the serine protease inhibitor-like (TIL domain-containing) family. As to expression, expressed by the venom gland.

Its subcellular location is the secreted. Its function is as follows. Serine protease inhibitor. This chain is Venom peptide BmKAPI, found in Olivierus martensii (Manchurian scorpion).